A 155-amino-acid polypeptide reads, in one-letter code: Ribonuclease 8 (155 aa).

Residues 1-28 form the signal peptide; sequence MAPARAGCCPLLLLLLLGLWVAEIPVSA. 3 disulfide bridges follow: Cys65–Cys119, Cys83–Cys134, and Cys90–Cys97. Substrate-binding positions include 66 to 70 and Lys91; that span reads KDLNT. His150 acts as the Proton donor in catalysis.

The protein belongs to the pancreatic ribonuclease family.

The protein localises to the secreted. Functionally, has a low ribonuclease activity. The polypeptide is Ribonuclease 8 (RNASE8) (Saguinus oedipus (Cotton-top tamarin)).